The following is a 315-amino-acid chain: Ribosomal RNA small subunit methyltransferase H (315 aa).

S-adenosyl-L-methionine contacts are provided by residues 37-39, Asp-57, Leu-91, Asp-105, and Gln-112; that span reads GGH.

This sequence belongs to the methyltransferase superfamily. RsmH family.

Its subcellular location is the cytoplasm. The catalysed reaction is cytidine(1402) in 16S rRNA + S-adenosyl-L-methionine = N(4)-methylcytidine(1402) in 16S rRNA + S-adenosyl-L-homocysteine + H(+). Functionally, specifically methylates the N4 position of cytidine in position 1402 (C1402) of 16S rRNA. This is Ribosomal RNA small subunit methyltransferase H from Syntrophus aciditrophicus (strain SB).